A 174-amino-acid polypeptide reads, in one-letter code: Ferritin, heavy subunit (174 aa).

The Ferritin-like diiron domain occupies 7–156; that stretch reads QNFHKDCEAA…DWVTNLRRLG (150 aa). Fe cation-binding residues include Glu-24, Glu-59, His-62, Glu-104, and Gln-138.

It belongs to the ferritin family. In liver, forms a heteromer consisting of middle and heavy subunits. The functional molecule forms a roughly spherical shell with a diameter of 12 nm and contains a central cavity into which the insoluble mineral iron core is deposited. In terms of tissue distribution, liver (at protein level).

It carries out the reaction 4 Fe(2+) + O2 + 4 H(+) = 4 Fe(3+) + 2 H2O. In terms of biological role, stores iron in a soluble, non-toxic, readily available form. Important for iron homeostasis. Has ferroxidase activity. Iron is taken up in the ferrous form and deposited as ferric hydroxides after oxidation. Also plays a role in delivery of iron to cells. Mediates iron uptake in capsule cells of the developing kidney. Delivery to lysosomes is mediated by the cargo receptor NCOA4 for autophagic degradation and release of iron. In Trematomus bernacchii (Emerald rockcod), this protein is Ferritin, heavy subunit.